Consider the following 429-residue polypeptide: MPNPRPAKPMAPSLALGPSPGVLPSWKTAPKGSELLGTRGSGGPFQGRDLRSGAHTSSSLNPLPPSQLQLPTVPLVMVAPSGARLGPSPHLQALLQDRPHFMHQLSTVDAHAQTPVLQVRPLDNPAMISLPPPSAATGVFSLKARPGLPPGINVASLEWVSREPALLCTFPRSGTPRKDSNLLAAPQGSYPLLANGVCKWPGCEKVFEEPEEFLKHCQADHLLDEKGKAQCLLQREVVQSLEQQLELEKEKLGAMQAHLAGKMALAKAPSVASMDKSSCCIVATSTQGSVLPAWSAPREAPDGGLFAVRRHLWGSHGNSSFPEFFHNMDYFKYHNMRPPFTYATLIRWAILEAPERQRTLNEIYHWFTRMFAYFRNHPATWKNAIRHNLSLHKCFVRVESEKGAVWTVDEFEFRKKRSQRPNKCSNPCP.

The segment at 1-67 (MPNPRPAKPM…SSLNPLPPSQ (67 aa)) is disordered. Ser-19 is subject to Phosphoserine; by CDK2. An N6-acetyllysine modification is found at Lys-31. Positions 56–67 (TSSSLNPLPPSQ) are enriched in low complexity. A Nuclear export signal motif is present at residues 67 to 75 (QLQLPTVPL). Residues 91-95 (LQALL) carry the LXXLL motif motif. The tract at residues 105–189 (LSTVDAHAQT…SNLLAAPQGS (85 aa)) is essential for transcriptional repressor activity and for interaction with KAT5 and HDAC7. The interval 148–198 (LPPGINVASLEWVSREPALLCTFPRSGTPRKDSNLLAAPQGSYPLLANGVC) is interaction with IKZF4. Thr-175 is modified (phosphothreonine; by CDK2). Residues 196-221 (GVCKWPGCEKVFEEPEEFLKHCQADH) form a C2H2-type zinc finger. The Nuclear export signal motif lies at 238–247 (VQSLEQQLEL). The leucine-zipper stretch occupies residues 238-259 (VQSLEQQLELEKEKLGAMQAHL). Residues Lys-249 and Lys-251 each participate in a glycyl lysine isopeptide (Lys-Gly) (interchain with G-Cter in ubiquitin) cross-link. N6-acetyllysine; alternate is present on residues Lys-262 and Lys-267. Residues Lys-262 and Lys-267 each participate in a glycyl lysine isopeptide (Lys-Gly) (interchain with G-Cter in ubiquitin); alternate cross-link. The tract at residues 277–336 (SSCCIVATSTQGSVLPAWSAPREAPDGGLFAVRRHLWGSHGNSSFPEFFHNMDYFKYHNM) is interaction with RUNX1. The segment at residues 337–423 (RPPFTYATLI…RKKRSQRPNK (87 aa)) is a DNA-binding region (fork-head). A Glycyl lysine isopeptide (Lys-Gly) (interchain with G-Cter in ubiquitin) cross-link involves residue Lys-393. The Nuclear localization signal signature appears at 414 to 417 (RKKR). At Ser-418 the chain carries Phosphoserine. A propeptide spanning residues 418–429 (SQRPNKCSNPCP) is cleaved from the precursor.

In terms of assembly, homodimer. Dimerization is essential for its transcriptional regulator activity. Interacts with IKZF3. Interacts (via LXXLL motif) with isoform 4 of RORA (via AF-2 motif). Interacts with STUB1 and HSPA1A/B. Interacts with IKZF4, HDAC7 and KAT5. Interacts with RUNX1, RUNX2, RUNX3 and NFATC2. Interacts with RORC. Interacts with HDAC9 in the absence of T-cell stimulation. Interacts with RELA, PPP1CA, PPP1CB, PPP1CG, HSPA8 and USP7. Post-translationally, acetylation on lysine residues stabilizes FOXP3 and promotes differentiation of T-cells into induced regulatory T-cells (iTregs) associated with suppressive functions. Acetylation is mediated by a coordinated action of KAT5 and EP300/p300 acetyltransferases: EP300/p300 is required to enhance KAT5 autoacetylation, promoting acetylation of FOXP3 by KAT5. Deacetylated by SIRT1. Polyubiquitinated, leading to its proteasomal degradation in regulatory T-cells (Treg) which is mediated by STUB1 in a HSPA1A/B-dependent manner. Deubiquitinated by USP7 and USP44 leading to increase in protein stability. In terms of processing, phosphorylation at Ser-418 regulates its transcriptional repressor activity and consequently, regulatory T-cells (Treg) suppressive function. Phosphorylation by CDK2 negatively regulates its transcriptional activity and protein stability. Post-translationally, undergoes proteolytic cleavage in activated regulatory T-cells (Treg), and can be cleaved at either the N- or C-terminal site, or at both sites. Treg expressing the form cleaved at C-terminal site or both N- and C-terminal sites exhibit an increased induction of IL10 and an increased capacity to suppress proliferation of conventional T-cells in vitro. Treg expressing the form cleaved at only the C-terminal site are highly effective at preventing experimental colitis in an in vivo model of inflammatory bowel disease. In terms of tissue distribution, high level of expression in thymus and spleen.

Its subcellular location is the nucleus. The protein resides in the cytoplasm. In terms of biological role, transcriptional regulator which is crucial for the development and inhibitory function of regulatory T-cells (Treg). Plays an essential role in maintaining homeostasis of the immune system by allowing the acquisition of full suppressive function and stability of the Treg lineage, and by directly modulating the expansion and function of conventional T-cells. Can act either as a transcriptional repressor or a transcriptional activator depending on its interactions with other transcription factors, histone acetylases and deacetylases. The suppressive activity of Treg involves the coordinate activation of many genes, including CTLA4 and TNFRSF18 by FOXP3 along with repression of genes encoding cytokines such as interleukin-2 (IL2) and interferon-gamma (IFNG). Inhibits cytokine production and T-cell effector function by repressing the activity of two key transcription factors, RELA and NFATC2. Mediates transcriptional repression of IL2 via its association with histone acetylase KAT5 and histone deacetylase HDAC7. Can activate the expression of TNFRSF18, IL2RA and CTLA4 and repress the expression of IL2 and IFNG via its association with transcription factor RUNX1. Inhibits the differentiation of IL17 producing helper T-cells (Th17) by antagonizing RORC function, leading to down-regulation of IL17 expression, favoring Treg development. Inhibits the transcriptional activator activity of RORA. Can repress the expression of IL2 and IFNG via its association with transcription factor IKZF4. The protein is Forkhead box protein P3 (Foxp3) of Mus musculus (Mouse).